A 109-amino-acid polypeptide reads, in one-letter code: Cell division suppressor protein YneA (109 aa).

Residues 39 to 90 enclose the LysM domain; sequence SEVNVNEGDSLWALADQYAGKSDMAKADFVSWVEKENNLSDGHVEAGDSVVI.

Belongs to the YneA family.

It localises to the cytoplasm. In terms of biological role, inhibits cell division during the SOS response. Affects a later stage of the cell division protein assembly, after the assembly of the Z ring, by probably suppressing recruitment of FtsL and/or DivIC to the division machinery. In Listeria monocytogenes serovar 1/2a (strain ATCC BAA-679 / EGD-e), this protein is Cell division suppressor protein YneA.